Reading from the N-terminus, the 178-residue chain is ATP synthase subunit delta (178 aa).

The protein belongs to the ATPase delta chain family. F-type ATPases have 2 components, F(1) - the catalytic core - and F(0) - the membrane proton channel. F(1) has five subunits: alpha(3), beta(3), gamma(1), delta(1), epsilon(1). F(0) has three main subunits: a(1), b(2) and c(10-14). The alpha and beta chains form an alternating ring which encloses part of the gamma chain. F(1) is attached to F(0) by a central stalk formed by the gamma and epsilon chains, while a peripheral stalk is formed by the delta and b chains.

It is found in the cell membrane. F(1)F(0) ATP synthase produces ATP from ADP in the presence of a proton or sodium gradient. F-type ATPases consist of two structural domains, F(1) containing the extramembraneous catalytic core and F(0) containing the membrane proton channel, linked together by a central stalk and a peripheral stalk. During catalysis, ATP synthesis in the catalytic domain of F(1) is coupled via a rotary mechanism of the central stalk subunits to proton translocation. Functionally, this protein is part of the stalk that links CF(0) to CF(1). It either transmits conformational changes from CF(0) to CF(1) or is implicated in proton conduction. The protein is ATP synthase subunit delta of Anoxybacillus flavithermus (strain DSM 21510 / WK1).